Consider the following 199-residue polypeptide: Transgelin-2 (199 aa).

An N-acetylalanine modification is found at alanine 2. The residue at position 11 (serine 11) is a Phosphoserine. An N6-acetyllysine mark is found at lysine 17 and lysine 20. Residues 24-136 (PDLEQILIQW…RTLMNLGGLA (113 aa)) form the Calponin-homology (CH) domain. Serine 163 carries the post-translational modification Phosphoserine. Lysine 171 is covalently cross-linked (Glycyl lysine isopeptide (Lys-Gly) (interchain with G-Cter in SUMO2)). One copy of the Calponin-like repeat lies at 174-199 (IGLQMGTNRGASQAGMTGYGMPRQIL). Residue threonine 180 is modified to Phosphothreonine. Arginine 182 and arginine 196 each carry omega-N-methylarginine.

The protein belongs to the calponin family.

This is Transgelin-2 (Tagln2) from Rattus norvegicus (Rat).